The chain runs to 220 residues: MAQKPKRTKSGSAWMHEHVTDAYVKKAQQDGFRSRAAYKLLEIDSRDHLLHPGMTVVDLGAAPGSWCQVAVQKMKRQGRVLAIDLLPVAPLPGVEALQGDFTAPDTLAWLENTLQAARVDLVLSDMAPNMSGVMLRDQARHYELCELALDFAVNWLKPDGAFLVKVFQGSGFEDFRNAMRRAFDQVVIRKPDASRDRSSEVYLLGRRPVKLESVAATGAS.

The S-adenosyl-L-methionine site is built by glycine 64, tryptophan 66, aspartate 84, aspartate 100, and aspartate 125. Residue lysine 165 is the Proton acceptor of the active site.

Belongs to the class I-like SAM-binding methyltransferase superfamily. RNA methyltransferase RlmE family.

The protein localises to the cytoplasm. The catalysed reaction is uridine(2552) in 23S rRNA + S-adenosyl-L-methionine = 2'-O-methyluridine(2552) in 23S rRNA + S-adenosyl-L-homocysteine + H(+). Functionally, specifically methylates the uridine in position 2552 of 23S rRNA at the 2'-O position of the ribose in the fully assembled 50S ribosomal subunit. In Thiobacillus denitrificans (strain ATCC 25259 / T1), this protein is Ribosomal RNA large subunit methyltransferase E.